We begin with the raw amino-acid sequence, 325 residues long: N-acetyl-gamma-glutamyl-phosphate reductase (325 aa).

Residue Cys-135 is part of the active site.

It belongs to the NAGSA dehydrogenase family. Type 1 subfamily.

It is found in the cytoplasm. The enzyme catalyses N-acetyl-L-glutamate 5-semialdehyde + phosphate + NADP(+) = N-acetyl-L-glutamyl 5-phosphate + NADPH + H(+). It functions in the pathway amino-acid biosynthesis; L-arginine biosynthesis; N(2)-acetyl-L-ornithine from L-glutamate: step 3/4. Its function is as follows. Catalyzes the NADPH-dependent reduction of N-acetyl-5-glutamyl phosphate to yield N-acetyl-L-glutamate 5-semialdehyde. The chain is N-acetyl-gamma-glutamyl-phosphate reductase from Karelsulcia muelleri (strain GWSS) (Sulcia muelleri).